The sequence spans 375 residues: Oleosin-B6 (375 aa).

Positions 1–32 (MKEEIQNETAQTQLQREGRMFSFLFPVIEVIK) are polar. A run of 3 helical transmembrane segments spans residues 21–43 (FSFLFPVIEVIKVVMASVASVVF), 55–75 (AVALAVSTPLFIIFSPILVPA), and 81–101 (LLATGLGAGTTLGVTGMGLLM). The hydrophobic stretch occupies residues 33 to 112 (VVMASVASVV…LIKHPGKEGA (80 aa)). Disordered regions lie at residues 144 to 284 (PGVG…SFLS) and 303 to 375 (IPGF…DESS). Basic and acidic residues predominate over residues 148-179 (KKSEGRGESKGKKGKKGKSEHGRGKHEGEGKS). A compositionally biased stretch (pro residues) spans 193-210 (NNPPPAGAPPTGSPPAAP). Tandem repeats lie at residues 207-209 (PAA), 210-212 (PAA), 213-215 (PEA), 216-218 (PAA), 219-221 (PAA), 222-224 (PAA), 225-227 (PAA), 228-230 (PAA), 231-233 (PAA), 234-236 (PAA), 237-239 (PED), 240-242 (PAA), 243-245 (PAA), 246-248 (PEA), 249-251 (PAT), 252-254 (PAA), 255-257 (PPA), 258-260 (PAA), 261-263 (APA), 264-266 (PAA), 267-269 (PAA), 270-272 (PPA), and 273-275 (PAA). Residues 207-275 (PAAPAAPEAP…APAAPPAPAA (69 aa)) are 23 X 3 AA approximate tandem repeats of P-A-A. A compositionally biased stretch (low complexity) spans 211 to 251 (AAPEAPAAPAAPAAPAAPAAPAAPAAPEDPAAPAAPEAPAT). Pro residues predominate over residues 252 to 280 (PAAPPAPAAAPAPAAPAAPPAPAAPPRPP). A compositionally biased stretch (basic residues) spans 316-331 (SKGGKKSKGKGKSNGR).

This sequence belongs to the oleosin family. In terms of tissue distribution, the full-length protein is found in the tapetal lipid bodies of immature anthers, the proteolytically cleaved C-terminal product is found on the coats of pollen grains. Not found in flowers, developing embryos or leaf tissue.

The protein resides in the lipid droplet. Its subcellular location is the membrane. Many of the major pollen coat proteins are derived from endoproteolytic cleavage of oleosin-like proteins. In Brassica napus (Rape), this protein is Oleosin-B6.